The primary structure comprises 220 residues: Pyridoxine/pyridoxamine 5'-phosphate oxidase (220 aa).

Substrate-binding positions include Arg13–Tyr16 and Lys77. FMN-binding positions include Arg72–Lys77, Phe87–Thr88, Lys94, and Gln116. Substrate-binding residues include Tyr134, Arg138, and Ser142. Residues Gln151–Ser152 and Trp197 contribute to the FMN site. Substrate is bound at residue Arg203 to His205. Arg207 is a binding site for FMN.

Belongs to the pyridoxamine 5'-phosphate oxidase family. As to quaternary structure, homodimer. It depends on FMN as a cofactor.

It carries out the reaction pyridoxamine 5'-phosphate + O2 + H2O = pyridoxal 5'-phosphate + H2O2 + NH4(+). The enzyme catalyses pyridoxine 5'-phosphate + O2 = pyridoxal 5'-phosphate + H2O2. Its pathway is cofactor metabolism; pyridoxal 5'-phosphate salvage; pyridoxal 5'-phosphate from pyridoxamine 5'-phosphate: step 1/1. The protein operates within cofactor metabolism; pyridoxal 5'-phosphate salvage; pyridoxal 5'-phosphate from pyridoxine 5'-phosphate: step 1/1. Functionally, catalyzes the oxidation of either pyridoxine 5'-phosphate (PNP) or pyridoxamine 5'-phosphate (PMP) into pyridoxal 5'-phosphate (PLP). The polypeptide is Pyridoxine/pyridoxamine 5'-phosphate oxidase (Mycolicibacterium paratuberculosis (strain ATCC BAA-968 / K-10) (Mycobacterium paratuberculosis)).